Here is a 129-residue protein sequence, read N- to C-terminus: NADH-quinone oxidoreductase subunit A (129 aa).

3 helical membrane passes run 6 to 26, 63 to 83, and 89 to 109; these read FWPFILYAGMVLVLVALIVGF, LVAVLFVIFDMEAAFIFAWAV, and GWIGYGGALAFITILGVALIY.

The protein belongs to the complex I subunit 3 family. NDH-1 is composed of 14 different subunits. Subunits NuoA, H, J, K, L, M, N constitute the membrane sector of the complex.

It localises to the cell inner membrane. The catalysed reaction is a quinone + NADH + 5 H(+)(in) = a quinol + NAD(+) + 4 H(+)(out). In terms of biological role, NDH-1 shuttles electrons from NADH, via FMN and iron-sulfur (Fe-S) centers, to quinones in the respiratory chain. The immediate electron acceptor for the enzyme in this species is believed to be ubiquinone. Couples the redox reaction to proton translocation (for every two electrons transferred, four hydrogen ions are translocated across the cytoplasmic membrane), and thus conserves the redox energy in a proton gradient. The protein is NADH-quinone oxidoreductase subunit A of Nitrosococcus oceani (strain ATCC 19707 / BCRC 17464 / JCM 30415 / NCIMB 11848 / C-107).